The sequence spans 123 residues: Alpha-ketoglutarate dehydrogenase subunit 4, mitochondrial (123 aa).

The N-terminal 8 residues, 1–8, are a transit peptide targeting the mitochondrion; the sequence is MIATPIRL.

It belongs to the alpha-ketoglutarate dehydrogenase component 4 family. As to quaternary structure, component of the 2-oxoglutarate dehydrogenase complex (OGDC), also called alpha-ketoglutarate dehydrogenase (KGDH) complex. The copmplex is composed of the catalytic subunits OGDH (2-oxoglutarate dehydrogenase KGD1; also called E1 subunit), DLST (dihydrolipoamide succinyltransferase KGD2; also called E2 subunit) and DLD (dihydrolipoamide dehydrogenase LPD1; also called E3 subunit), and the assembly factor KGD4. Within OGDC, interacts (via N-terminus) with E3 subunit and (via C-terminus) with the complex core formed by E1 and E2 subunits.

The protein localises to the mitochondrion. Its function is as follows. Molecular adapter that is necessary to a form a stable 2-oxoglutarate dehydrogenase enzyme complex (OGDC). Required for incorporation of the E3 subunit (LPD1) into the E1-E2 core (KGD1-KGD2) of mitochondrial OGDC, and acting as a stability factor for the fully assembled complex. In Saccharomyces cerevisiae (strain ATCC 204508 / S288c) (Baker's yeast), this protein is Alpha-ketoglutarate dehydrogenase subunit 4, mitochondrial.